The chain runs to 316 residues: MTNTSRPVLNLDLDLLRTFVAVADLNTFAAAAVAVCRTQSAVSQQMQRLEQLIGKELFARHGRNKLLTEHGIQFLGYARKILQFNDEACASLMYSDIQGTLTIGASDDTADTILPFILQRVTNVFPKLSIAVSIKRSAEMTDMLQQGKIDLVITTSNNDDLPHVLLRTSPTLWYCSADYQYQPGETVSLVVLDEPSPFRALALDQLTAAGIPWKISYVASTLSAVRAAVKAGLGITVRSVEMMSPELRVLGEEEGLPKLPDTRYYLCRNPDHDNELTNAIFSAIESGTRSHLLPVSTGTESELREPPTDESLKDIT.

The region spanning 11-68 (LDLDLLRTFVAVADLNTFAAAAVAVCRTQSAVSQQMQRLEQLIGKELFARHGRNKLLT) is the HTH lysR-type domain. A DNA-binding region (H-T-H motif) is located at residues 28-47 (FAAAAVAVCRTQSAVSQQMQ). Residues 293–316 (LPVSTGTESELREPPTDESLKDIT) are disordered. Positions 301–316 (SELREPPTDESLKDIT) are enriched in basic and acidic residues.

The protein belongs to the LysR transcriptional regulatory family.

Functionally, regulates pectinase gene expression. The polypeptide is HTH-type transcriptional regulator PecT (pecT) (Dickeya dadantii (strain 3937) (Erwinia chrysanthemi (strain 3937))).